A 166-amino-acid chain; its full sequence is MEATTAGVGRLEEEALRRKERLKALREKTGRKDKEDGEPKTKHLREEEEEGEKHRELRLRNYVPEDEDLKKRRVPQAKPVAVEEKVKEQLEAAKPEPVIEEVDLANLAPRKPDWDLKRDVAKKLEKLKKRTQRAIAELIRERLKGQEDSLASAVDAATEQKTCDSD.

Residue Met1 is modified to N-acetylmethionine. Residues 1 to 56 form a disordered region; it reads MEATTAGVGRLEEEALRRKERLKALREKTGRKDKEDGEPKTKHLREEEEEGEKHRE. Residues 8–28 are a coiled coil; it reads VGRLEEEALRRKERLKALREK. Residues 10–56 are compositionally biased toward basic and acidic residues; sequence RLEEEALRRKERLKALREKTGRKDKEDGEPKTKHLREEEEEGEKHRE. Lys53 carries the post-translational modification N6-acetyllysine. Residue Lys94 forms a Glycyl lysine isopeptide (Lys-Gly) (interchain with G-Cter in SUMO2) linkage. Residues 117–144 adopt a coiled-coil conformation; it reads KRDVAKKLEKLKKRTQRAIAELIRERLK. Positions 147–166 are disordered; sequence EDSLASAVDAATEQKTCDSD. Phosphoserine is present on residues Ser149 and Ser165.

The polypeptide is Coiled-coil domain-containing protein 12 (CCDC12) (Homo sapiens (Human)).